A 2647-amino-acid chain; its full sequence is Filamin-A (2647 aa).

The disordered stretch occupies residues 1–37; sequence MSSSHSRCGQSAAVASPGGSIDSRDAEMPATEKDLAE. Ser-2 carries the N-acetylserine modification. Residues 2 to 274 form an actin-binding region; that stretch reads SSSHSRCGQS…PKAKLKPGAP (273 aa). A phosphoserine mark is found at Ser-11, Ser-16, and Ser-20. Residues 22-37 show a composition bias toward basic and acidic residues; the sequence is DSRDAEMPATEKDLAE. Glycyl lysine isopeptide (Lys-Gly) (interchain with G-Cter in ubiquitin) cross-links involve residues Lys-42, Lys-43, and Lys-135. Calponin-homology (CH) domains lie at 43–149 and 166–269; these read KIQQ…LHYS and QTPK…KAKL. A disordered region spans residues 271-294; it reads PGAPLRPKLNPKKARAYGPGIEPT. 15 Filamin repeats span residues 276–374, 376–474, 475–570, 571–663, 667–763, 764–866, 867–965, 966–1061, 1062–1154, 1155–1249, 1250–1349, 1350–1442, 1443–1539, 1540–1636, and 1641–1740; these read RPKL…EVYV, KSQG…TVTV, GQAC…EVKV, GTEC…MADI, PQDF…RVNV, GAGS…RVKV, EPSH…SVGV, SPSL…PLEA, VAPT…KAHV, APCF…KLQV, EPAV…QVPV, TEGC…KVPV, HDVT…KVKV, LPTH…RVRA, and DASK…QVTA. Residue Lys-299 forms a Glycyl lysine isopeptide (Lys-Gly) (interchain with G-Cter in SUMO1); alternate linkage. Residue Lys-299 forms a Glycyl lysine isopeptide (Lys-Gly) (interchain with G-Cter in SUMO2); alternate linkage. N6-acetyllysine occurs at positions 376 and 508. N6-acetyllysine is present on residues Lys-700, Lys-781, Lys-837, Lys-865, and Lys-906. Phosphoserine occurs at positions 968 and 1055. Lys-1071 carries the post-translational modification N6-acetyllysine; alternate. Lys-1071 carries the N6-succinyllysine; alternate modification. Phosphoserine is present on Ser-1084. Thr-1089 is subject to Phosphothreonine. Residues Ser-1301 and Ser-1338 each carry the phosphoserine modification. An N6-acetyllysine modification is found at Lys-1372. Phosphoserine is present on residues Ser-1459 and Ser-1533. An interaction with furin region spans residues 1490–1607; sequence PKGLVEPVDV…DNHDGTYTVA (118 aa). Position 1538 is an N6-acetyllysine (Lys-1538). Residues Ser-1630 and Ser-1734 each carry the phosphoserine modification. The segment at 1741 to 1778 is hinge 1; sequence LAGDQPTVQTPLRSQQLAPQYNYPQGSQQTWIPERPMV. Residue Thr-1750 is modified to Phosphothreonine. Filamin repeat units follow at residues 1765-1860, 1861-1952, 1953-2039, 2042-2134, 2135-2230, 2233-2325, 2327-2420, and 2424-2516; these read QGSQ…QFYV, DYVN…TARV, TGDD…PVVI, SEIG…SVKV, TGEG…QFTV, LGEG…VVPV, SPSG…KIRV, and GHGG…KAKV. At Ser-1835 the chain carries Phosphoserine. Phosphoserine is present on residues Ser-1967, Ser-2053, Ser-2128, Ser-2152, Ser-2158, Ser-2163, Ser-2180, Ser-2284, Ser-2327, and Ser-2329. A Phosphothreonine modification is found at Thr-2336. Phosphoserine is present on residues Ser-2338, Ser-2370, Ser-2414, Ser-2510, Ser-2523, and Ser-2526. The tract at residues 2517-2553 is hinge 2; the sequence is TGPRLVSNHSLHETSSVFVDSLTKVATVPQHATSGPG. The tract at residues 2517-2647 is self-association site, tail; it reads TGPRLVSNHS…PGSPYRIMVP (131 aa). The stretch at 2552-2646 is one Filamin 24 repeat; it reads PGPADVSKVV…IPGSPYRIMV (95 aa). An N6-acetyllysine; alternate modification is found at Lys-2569. Lys-2569 is subject to N6-succinyllysine; alternate. N6-acetyllysine is present on Lys-2575. Phosphothreonine is present on Thr-2599. N6-acetyllysine occurs at positions 2607 and 2621.

It belongs to the filamin family. In terms of assembly, homodimer. Interacts with FCGR1A, FLNB, FURIN, HSPB7, KCND2, INPPL1, MYOT, MYOZ1, PDLIM2, ARHGAP24, PSEN1, PSEN2 and ECSCR. Also interacts with various other binding partners in addition to filamentous actin. Interacts (via N-terminus) with TAF1B. Interacts (via N-terminus) with MIS18BP1 (via N-terminus). Interacts with TMEM67 (via C-terminus) and MKS1. Interacts (via actin-binding domain) with MICALL2 (via calponin-homology (CH) domain). Interacts with RFLNA and RFLNB. Interacts (via filamin repeat 5) with SYK; docks SYK to the plasma membrane. Interacts (via filamin repeats 19 and 21) with DRD3; increased PKA-mediated phosphorylation at Ser-2152. Interacts (via filamin repeat 21) with MAS1, AGTR1 and ADRA1D; increases PKA-mediated phosphorylation of FLNA at Ser-2152. Interacts (via filamin repeats 4, 9, 12, 17, 19, 21, and 23) with GP1BA (high affinity), ITGB7, ITGB2 and FBLIM1. Interacts with CEACAM1 (via cytoplasmic domain); inhibits cell migration and cell scattering by interfering with the interaction between FLNA and RALA. Interacts with FOXC1. Interacts (via calponin-homology (CH) domain 1 and filamin repeat 24) with CRMP1; the interaction alters FLNA ternary structure and thus promotes FLNA dissociation from F-actin. Interacts with DPYSL3/CRMP3 and DPYSL4/CRMP4. In terms of processing, phosphorylation at Ser-2152 is negatively regulated by the autoinhibited conformation of filamin repeats 19-21. Ligand binding induces a conformational switch triggering phosphorylation at Ser-2152 by PKA. Polyubiquitination in the CH1 domain by a SCF-like complex containing ASB2 leads to proteasomal degradation. Prior dissociation from actin may be required to expose the target lysines. Ubiquitinated in endothelial cells by RNF213 downstream of the non-canonical Wnt signaling pathway, leading to its degradation by the proteasome. In terms of tissue distribution, widely expressed. Highly expressed in Purkinje cells.

Its subcellular location is the cytoplasm. The protein localises to the cell cortex. It is found in the cytoskeleton. It localises to the perikaryon. The protein resides in the cell projection. Its subcellular location is the growth cone. The protein localises to the podosome. Functionally, actin binding protein that promotes orthogonal branching of actin filaments and links actin filaments to membrane glycoproteins. Anchors various transmembrane proteins to the actin cytoskeleton and serves as a scaffold for a wide range of cytoplasmic signaling proteins. Interaction with FLNB may allow neuroblast migration from the ventricular zone into the cortical plate. Tethers cell surface-localized furin, modulates its rate of internalization and directs its intracellular trafficking. Involved in ciliogenesis. Plays a role in cell-cell contacts and adherens junctions during the development of blood vessels, heart and brain organs. Plays a role in platelets morphology through interaction with SYK that regulates ITAM- and ITAM-like-containing receptor signaling, resulting in by platelet cytoskeleton organization maintenance. During the axon guidance process, required for growth cone collapse induced by SEMA3A-mediated stimulation of neurons. This Mus musculus (Mouse) protein is Filamin-A (Flna).